A 587-amino-acid polypeptide reads, in one-letter code: Ankyrin repeat and SOCS box protein 14 (587 aa).

ANK repeat units lie at residues 81-110 (NGWL…PSTW), 116-145 (NGET…NPNA), 149-178 (EGNS…DVNL), 182-211 (NERT…YPDA), 215-244 (YGFT…DVHS), 248-277 (DSSS…DANI), 281-310 (SGHL…IAAI), 313-342 (SGIS…DVNF), 355-384 (QRKS…LPNQ), 385-414 (DPVN…NVNY), and 416-449 (CRVN…DTER). Residues 521 to 576 (WPEIHFILANPRSLQHLCRLKIRKCMGRLRLRCPVFMSFLPLPNLLKAYVLYKEYD) enclose the SOCS box domain.

It belongs to the ankyrin SOCS box (ASB) family. Interacts with MAPRE2; this interaction promotes MAPRE2 degradation.

It functions in the pathway protein modification; protein ubiquitination. Functionally, may be a substrate-recognition component of a SCF-like ECS (Elongin-Cullin-SOCS-box protein) E3 ubiquitin-protein ligase complex which mediates the ubiquitination and subsequent proteasomal degradation of target proteins. Plays a role in the inhibition of cardiomyocyte nuclear proliferation by mediating the ubiquitination and degradation of MAPRE2. This is Ankyrin repeat and SOCS box protein 14 (Asb14) from Mus musculus (Mouse).